A 170-amino-acid polypeptide reads, in one-letter code: Nicotinamide-nucleotide adenylyltransferase (170 aa).

It belongs to the archaeal NMN adenylyltransferase family.

It localises to the cytoplasm. The enzyme catalyses beta-nicotinamide D-ribonucleotide + ATP + H(+) = diphosphate + NAD(+). It functions in the pathway cofactor biosynthesis; NAD(+) biosynthesis; NAD(+) from nicotinamide D-ribonucleotide: step 1/1. The sequence is that of Nicotinamide-nucleotide adenylyltransferase from Methanothrix thermoacetophila (strain DSM 6194 / JCM 14653 / NBRC 101360 / PT) (Methanosaeta thermophila).